A 1076-amino-acid chain; its full sequence is Carbamoyl phosphate synthase large chain (1076 aa).

Residues Met1–Glu402 are carboxyphosphate synthetic domain. ATP-binding residues include Arg129, Arg169, Gly175, Gly176, Glu208, Val210, Glu215, Gly241, Val242, His243, Gln285, and Glu299. One can recognise an ATP-grasp 1 domain in the interval Lys133–Val328. Residues Gln285, Glu299, and Asn301 each coordinate Mg(2+). Mn(2+)-binding residues include Gln285, Glu299, and Asn301. The interval Ile403 to Ala555 is oligomerization domain. The tract at residues Leu556–Lys939 is carbamoyl phosphate synthetic domain. Positions Ala680–Met871 constitute an ATP-grasp 2 domain. ATP is bound by residues Arg716, Lys755, Leu757, Glu762, Gly787, Val788, His789, Ser790, Gln830, and Glu842. 3 residues coordinate Mg(2+): Gln830, Glu842, and Asn844. Residues Gln830, Glu842, and Asn844 each contribute to the Mn(2+) site. The region spanning Met938–Ser1076 is the MGS-like domain. Positions Leu940 to Ser1076 are allosteric domain.

It belongs to the CarB family. Composed of two chains; the small (or glutamine) chain promotes the hydrolysis of glutamine to ammonia, which is used by the large (or ammonia) chain to synthesize carbamoyl phosphate. Tetramer of heterodimers (alpha,beta)4. Requires Mg(2+) as cofactor. It depends on Mn(2+) as a cofactor.

The enzyme catalyses hydrogencarbonate + L-glutamine + 2 ATP + H2O = carbamoyl phosphate + L-glutamate + 2 ADP + phosphate + 2 H(+). The catalysed reaction is hydrogencarbonate + NH4(+) + 2 ATP = carbamoyl phosphate + 2 ADP + phosphate + 2 H(+). Its pathway is amino-acid biosynthesis; L-arginine biosynthesis; carbamoyl phosphate from bicarbonate: step 1/1. It participates in pyrimidine metabolism; UMP biosynthesis via de novo pathway; (S)-dihydroorotate from bicarbonate: step 1/3. Functionally, large subunit of the glutamine-dependent carbamoyl phosphate synthetase (CPSase). CPSase catalyzes the formation of carbamoyl phosphate from the ammonia moiety of glutamine, carbonate, and phosphate donated by ATP, constituting the first step of 2 biosynthetic pathways, one leading to arginine and/or urea and the other to pyrimidine nucleotides. The large subunit (synthetase) binds the substrates ammonia (free or transferred from glutamine from the small subunit), hydrogencarbonate and ATP and carries out an ATP-coupled ligase reaction, activating hydrogencarbonate by forming carboxy phosphate which reacts with ammonia to form carbamoyl phosphate. This Archaeoglobus fulgidus (strain ATCC 49558 / DSM 4304 / JCM 9628 / NBRC 100126 / VC-16) protein is Carbamoyl phosphate synthase large chain.